The chain runs to 302 residues: Snake venom metalloprotease inhibitor 02A10 (302 aa).

An N-terminal signal peptide occupies residues 1–23; that stretch reads MSVSRLAASGLLLVSLLALALDG. A propeptide spanning residues 24–47 is cleaved from the precursor; that stretch reads KPVEKWSPWLWPPRPRPPIPPLQQ. Residues 32-302 are disordered; the sequence is WLWPPRPRPP…CPKLPPSGGH (271 aa). Pro residues predominate over residues 33-44; the sequence is LWPPRPRPPIPP. Residue Gln-48 is modified to Pyrrolidone carboxylic acid. A propeptide spanning residues 51–58 is cleaved from the precursor; sequence LDPPIPQQ. Gln-59 carries the post-translational modification Pyrrolidone carboxylic acid. The propeptide occupies 62 to 69; the sequence is LDPPIPQQ. Gln-70 carries the pyrrolidone carboxylic acid modification. Positions 73-80 are excised as a propeptide; that stretch reads LDPPIPQQ. Pyrrolidone carboxylic acid is present on Gln-81. The propeptide occupies 84-91; that stretch reads LNPPIPQQ. Position 92 is a pyrrolidone carboxylic acid (Gln-92). The propeptide occupies 95–102; the sequence is LDPPIPQQ. A Pyrrolidone carboxylic acid modification is found at Gln-103. The propeptide occupies 106–113; the sequence is LNPPIPQQ. Gln-114 bears the Pyrrolidone carboxylic acid mark. Positions 117 to 124 are excised as a propeptide; it reads LNPPIPQQ. A Pyrrolidone carboxylic acid modification is found at Gln-125. The propeptide occupies 128–135; that stretch reads LNPPIPQQ. A Pyrrolidone carboxylic acid modification is found at Gln-136. The propeptide occupies 139–146; that stretch reads LNPPIPQQ. Gln-147 is modified (pyrrolidone carboxylic acid). A propeptide spanning residues 150-157 is cleaved from the precursor; it reads LDPPIPQQ. The residue at position 158 (Gln-158) is a Pyrrolidone carboxylic acid. The propeptide occupies 161 to 168; that stretch reads LDPPIPQQ. Residue Gln-169 is modified to Pyrrolidone carboxylic acid. Residues 172–179 constitute a propeptide that is removed on maturation; it reads LDPPIPQQ. Gln-180 is modified (pyrrolidone carboxylic acid). The propeptide occupies 183 to 190; it reads LNPPIPQQ. The residue at position 191 (Gln-191) is a Pyrrolidone carboxylic acid. The propeptide occupies 194-201; the sequence is LDPPIPQQ. At Gln-202 the chain carries Pyrrolidone carboxylic acid. The propeptide occupies 205–212; sequence LDPPIPQQ. Gln-213 bears the Pyrrolidone carboxylic acid mark. Positions 216–223 are excised as a propeptide; the sequence is LNPPIPQQ. A Pyrrolidone carboxylic acid modification is found at Gln-224. Positions 227 to 273 are excised as a propeptide; it reads QRPLQPEVPSLMELHQERQKQGRMMHHDEDPGDAAEGPRRQKKEPGK. 2 stretches are compositionally biased toward basic and acidic residues: residues 240–255 and 262–273; these read LHQERQKQGRMMHHDE and EGPRRQKKEPGK. Cys-279 and Cys-293 are disulfide-bonded. The propeptide occupies 294–302; it reads PKLPPSGGH.

This sequence in the C-terminal section; belongs to the natriuretic peptide family. As to expression, expressed by the venom gland.

It is found in the secreted. In terms of biological role, pEKW peptides may serve as metalloproteinase inhibitors during glandular storage. Their inhibition may be instantly disengaged, by dilution or physiochemical change, when venom is injected into tissue of the victim. Functionally, exhibits hypotensive and vasodepressor activity. Acts by activating natriuretic receptors (NPR1 and/or NPR2 and/or NPR3). The sequence is that of Snake venom metalloprotease inhibitor 02A10 (Svmpi-Cce12) from Cerastes cerastes (Horned desert viper).